The following is a 93-amino-acid chain: YcgL domain-containing protein VIBHAR_01387 (93 aa).

In terms of domain architecture, YcgL spans 1-84 (MLCSIYKSSR…PPENLLEKYK (84 aa)).

In Vibrio campbellii (strain ATCC BAA-1116), this protein is YcgL domain-containing protein VIBHAR_01387.